A 157-amino-acid polypeptide reads, in one-letter code: ATP synthase subunit b (157 aa).

A helical transmembrane segment spans residues 1 to 21 (MHFLDESFWLAISFIIFVYLI).

It belongs to the ATPase B chain family. F-type ATPases have 2 components, F(1) - the catalytic core - and F(0) - the membrane proton channel. F(1) has five subunits: alpha(3), beta(3), gamma(1), delta(1), epsilon(1). F(0) has three main subunits: a(1), b(2) and c(10-14). The alpha and beta chains form an alternating ring which encloses part of the gamma chain. F(1) is attached to F(0) by a central stalk formed by the gamma and epsilon chains, while a peripheral stalk is formed by the delta and b chains.

The protein localises to the cell inner membrane. F(1)F(0) ATP synthase produces ATP from ADP in the presence of a proton or sodium gradient. F-type ATPases consist of two structural domains, F(1) containing the extramembraneous catalytic core and F(0) containing the membrane proton channel, linked together by a central stalk and a peripheral stalk. During catalysis, ATP synthesis in the catalytic domain of F(1) is coupled via a rotary mechanism of the central stalk subunits to proton translocation. Its function is as follows. Component of the F(0) channel, it forms part of the peripheral stalk, linking F(1) to F(0). This chain is ATP synthase subunit b, found in Rickettsia bellii (strain RML369-C).